The chain runs to 492 residues: MNMPLLLLIAIVVVSLSHGNGEQTDLTRETFPAGFVFGTASSAYQVEGNALQYGRGPCIWDTFLMQPGVTPDNSTANVTVDEYHRYMDDVDNMVRVGFDAYRFSISWSRIFPSGLGKINKDGVDYYHRLIDYMLANNIIPYVVLYHYDLPQVLHDQYKGWLHPRIVRDFVRFADFCFKTYGHKVKNWFTINEPRMMANHGYGDGFFPPGRCTGCQPGGNSATEPYIAAHNLLLSHAAAVRTYRDKYQAIQKGKIGILLDFVWYEPLTDKEEDHAAAHRAREFTLGWYLHPITYGHYPETMQNAVKERLPNFTREQSEMIKGSADYIAINHYTTYYVSHHVNKTSISYLNDWDVKISYERNGVPIGKQAYSNWLYVVPWGIYKAVMHVKEKYKDPIIIIGENGIDQPGNETLPGALYDFFRIQYFDQYLHELKRAIKDGARVTGYFAWSLLDNFEWRLGFTSKFGIVYVDRSTFTRYPKDSTRWFRKMIKSEV.

The signal sequence occupies residues 1 to 21 (MNMPLLLLIAIVVVSLSHGNG). An a beta-D-glucoside-binding site is contributed by Q45. N-linked (GlcNAc...) asparagine glycans are attached at residues N73 and N77. Residues H146 and 191–192 (NE) each bind a beta-D-glucoside. Residue E192 is the Proton donor of the active site. C211 and C214 are disulfide-bonded. N310 carries N-linked (GlcNAc...) asparagine glycosylation. Y331 provides a ligand contact to a beta-D-glucoside. N341 is a glycosylation site (N-linked (GlcNAc...) asparagine). E400 contributes to the a beta-D-glucoside binding site. E400 acts as the Nucleophile in catalysis. N408 carries an N-linked (GlcNAc...) asparagine glycan. A beta-D-glucoside-binding positions include W447, 454–455 (EW), and F463.

This sequence belongs to the glycosyl hydrolase 1 family.

The catalysed reaction is Hydrolysis of terminal, non-reducing beta-D-glucosyl residues with release of beta-D-glucose.. The protein is Beta-glucosidase 38 (BGLU38) of Oryza sativa subsp. japonica (Rice).